A 398-amino-acid chain; its full sequence is tRNA-specific 2-thiouridylase MnmA (398 aa).

ATP contacts are provided by residues 18–25 (AMSGGVDS) and leucine 44. Catalysis depends on cysteine 112, which acts as the Nucleophile. Cysteine 112 and cysteine 213 form a disulfide bridge. Glycine 136 serves as a coordination point for ATP. The interaction with tRNA stretch occupies residues 163–165 (RDQ). Residue cysteine 213 is the Cysteine persulfide intermediate of the active site.

It belongs to the MnmA/TRMU family.

The protein resides in the cytoplasm. It carries out the reaction S-sulfanyl-L-cysteinyl-[protein] + uridine(34) in tRNA + AH2 + ATP = 2-thiouridine(34) in tRNA + L-cysteinyl-[protein] + A + AMP + diphosphate + H(+). In terms of biological role, catalyzes the 2-thiolation of uridine at the wobble position (U34) of tRNA, leading to the formation of s(2)U34. The chain is tRNA-specific 2-thiouridylase MnmA from Agrobacterium fabrum (strain C58 / ATCC 33970) (Agrobacterium tumefaciens (strain C58)).